Consider the following 416-residue polypeptide: Glutamyl-tRNA reductase (416 aa).

Substrate-binding positions include 49-52, serine 105, 110-112, and glutamine 116; these read TCNR and EPQ. Cysteine 50 serves as the catalytic Nucleophile. 185–190 provides a ligand contact to NADP(+); it reads GAGETI.

Belongs to the glutamyl-tRNA reductase family. As to quaternary structure, homodimer.

It carries out the reaction (S)-4-amino-5-oxopentanoate + tRNA(Glu) + NADP(+) = L-glutamyl-tRNA(Glu) + NADPH + H(+). It participates in porphyrin-containing compound metabolism; protoporphyrin-IX biosynthesis; 5-aminolevulinate from L-glutamyl-tRNA(Glu): step 1/2. Catalyzes the NADPH-dependent reduction of glutamyl-tRNA(Glu) to glutamate 1-semialdehyde (GSA). The sequence is that of Glutamyl-tRNA reductase from Shewanella oneidensis (strain ATCC 700550 / JCM 31522 / CIP 106686 / LMG 19005 / NCIMB 14063 / MR-1).